The primary structure comprises 244 residues: Small ribosomal subunit protein eS4 (244 aa).

The region spanning 37-123 is the S4 RNA-binding domain; the sequence is VPLAILLKYY…AKYKFVRIMN (87 aa).

Belongs to the eukaryotic ribosomal protein eS4 family.

This chain is Small ribosomal subunit protein eS4 (rps4e), found in Sulfolobus acidocaldarius (strain ATCC 33909 / DSM 639 / JCM 8929 / NBRC 15157 / NCIMB 11770).